The primary structure comprises 383 residues: Lipid-A-disaccharide synthase (383 aa).

Belongs to the LpxB family.

The catalysed reaction is a lipid X + a UDP-2-N,3-O-bis[(3R)-3-hydroxyacyl]-alpha-D-glucosamine = a lipid A disaccharide + UDP + H(+). Its pathway is bacterial outer membrane biogenesis; LPS lipid A biosynthesis. Its function is as follows. Condensation of UDP-2,3-diacylglucosamine and 2,3-diacylglucosamine-1-phosphate to form lipid A disaccharide, a precursor of lipid A, a phosphorylated glycolipid that anchors the lipopolysaccharide to the outer membrane of the cell. In Myxococcus xanthus (strain DK1622), this protein is Lipid-A-disaccharide synthase.